Here is a 180-residue protein sequence, read N- to C-terminus: Large ribosomal subunit protein uL5 (180 aa).

It belongs to the universal ribosomal protein uL5 family. In terms of assembly, part of the 50S ribosomal subunit; part of the 5S rRNA/L5/L18/L25 subcomplex. Contacts the 5S rRNA and the P site tRNA. Forms a bridge to the 30S subunit in the 70S ribosome.

In terms of biological role, this is one of the proteins that bind and probably mediate the attachment of the 5S RNA into the large ribosomal subunit, where it forms part of the central protuberance. In the 70S ribosome it contacts protein S13 of the 30S subunit (bridge B1b), connecting the 2 subunits; this bridge is implicated in subunit movement. Contacts the P site tRNA; the 5S rRNA and some of its associated proteins might help stabilize positioning of ribosome-bound tRNAs. The sequence is that of Large ribosomal subunit protein uL5 from Anaeromyxobacter sp. (strain Fw109-5).